We begin with the raw amino-acid sequence, 812 residues long: Phospholipase D alpha 1 (812 aa).

Positions 1-130 constitute a C2 domain; the sequence is MAQILLHGTL…LGGEEIDKWL (130 aa). Asp190 serves as a coordination point for Ca(2+). The region spanning 330-368 is the PLD phosphodiesterase 1 domain; it reads TMFTHHQKIVVVDHEMPNQGSQQRRIVSFIGGIDLCDGR. Active-site residues include His335, Lys337, and Asp342. His335 serves as a coordination point for a 1,2-diacyl-sn-glycero-3-phosphate. His374 and His408 together coordinate Ca(2+). A 1,2-diacyl-sn-glycero-3-phosphate-binding residues include Gln524 and His663. The region spanning 658–685 is the PLD phosphodiesterase 2 domain; that stretch reads FMIYVHTKMMIVDDEYIIIGSANINQRS. Active-site residues include His663, Lys665, and Asp670. Glu724 contributes to the Ca(2+) binding site.

The protein belongs to the phospholipase D family. C2-PLD subfamily. As to quaternary structure, monomer. Ca(2+) is required as a cofactor.

The enzyme catalyses a 1,2-diacyl-sn-glycero-3-phosphocholine + H2O = a 1,2-diacyl-sn-glycero-3-phosphate + choline + H(+). Hydrolyzes glycerol-phospholipids at the terminal phosphodiesteric bond. Plays an important role in various cellular processes. This Zea mays (Maize) protein is Phospholipase D alpha 1 (PLD1).